Here is a 116-residue protein sequence, read N- to C-terminus: Large ribosomal subunit protein uL18 (116 aa).

The protein belongs to the universal ribosomal protein uL18 family. As to quaternary structure, part of the 50S ribosomal subunit; part of the 5S rRNA/L5/L18/L25 subcomplex. Contacts the 5S and 23S rRNAs.

Functionally, this is one of the proteins that bind and probably mediate the attachment of the 5S RNA into the large ribosomal subunit, where it forms part of the central protuberance. The protein is Large ribosomal subunit protein uL18 of Azotobacter vinelandii (strain DJ / ATCC BAA-1303).